A 311-amino-acid polypeptide reads, in one-letter code: Pyrimidine-specific ribonucleoside hydrolase RihA (311 aa).

Histidine 240 is a catalytic residue.

Belongs to the IUNH family. RihA subfamily.

Functionally, hydrolyzes cytidine or uridine to ribose and cytosine or uracil, respectively. The chain is Pyrimidine-specific ribonucleoside hydrolase RihA from Salmonella paratyphi A (strain ATCC 9150 / SARB42).